Reading from the N-terminus, the 353-residue chain is Paraneoplastic antigen Ma1 (353 aa).

It belongs to the PNMA family. As to expression, testis- and brain-specific. In some cancer patients, specifically expressed by paraneoplastic tumor cells.

The protein localises to the nucleus. It localises to the nucleolus. In Homo sapiens (Human), this protein is Paraneoplastic antigen Ma1 (PNMA1).